We begin with the raw amino-acid sequence, 447 residues long: Probable glycine dehydrogenase (decarboxylating) subunit 1 (447 aa).

Belongs to the GcvP family. N-terminal subunit subfamily. In terms of assembly, the glycine cleavage system is composed of four proteins: P, T, L and H. In this organism, the P 'protein' is a heterodimer of two subunits.

The enzyme catalyses N(6)-[(R)-lipoyl]-L-lysyl-[glycine-cleavage complex H protein] + glycine + H(+) = N(6)-[(R)-S(8)-aminomethyldihydrolipoyl]-L-lysyl-[glycine-cleavage complex H protein] + CO2. Its function is as follows. The glycine cleavage system catalyzes the degradation of glycine. The P protein binds the alpha-amino group of glycine through its pyridoxal phosphate cofactor; CO(2) is released and the remaining methylamine moiety is then transferred to the lipoamide cofactor of the H protein. The protein is Probable glycine dehydrogenase (decarboxylating) subunit 1 of Bacillus cereus (strain G9842).